The chain runs to 199 residues: Elongation factor Ts (199 aa).

The interval 82–85 (TDFV) is involved in Mg(2+) ion dislocation from EF-Tu.

The protein belongs to the EF-Ts family.

It is found in the cytoplasm. Its function is as follows. Associates with the EF-Tu.GDP complex and induces the exchange of GDP to GTP. It remains bound to the aminoacyl-tRNA.EF-Tu.GTP complex up to the GTP hydrolysis stage on the ribosome. The sequence is that of Elongation factor Ts from Leptospira borgpetersenii serovar Hardjo-bovis (strain JB197).